The primary structure comprises 115 residues: Large ribosomal subunit protein bL19 (115 aa).

The protein belongs to the bacterial ribosomal protein bL19 family.

Its function is as follows. This protein is located at the 30S-50S ribosomal subunit interface and may play a role in the structure and function of the aminoacyl-tRNA binding site. The sequence is that of Large ribosomal subunit protein bL19 (rplS) from Buchnera aphidicola subsp. Acyrthosiphon pisum (strain APS) (Acyrthosiphon pisum symbiotic bacterium).